The primary structure comprises 81 residues: Delta-actitoxin-Aeq2d (81 aa).

Positions 1–19 are cleaved as a signal peptide; the sequence is MNRLMILVFAAVILALASA. Positions 20–25 are excised as a propeptide; sequence DDVDIA. 3 disulfide bridges follow: Cys31–Cys78, Cys33–Cys68, and Cys61–Cys79.

The protein belongs to the sea anemone sodium channel inhibitory toxin family. Type I subfamily.

It localises to the secreted. The protein localises to the nematocyst. Binds specifically to voltage-gated sodium channels (Nav), thereby delaying their inactivation during signal transduction. Causes death to crabs. This chain is Delta-actitoxin-Aeq2d, found in Actinia equina (Beadlet anemone).